Here is a 147-residue protein sequence, read N- to C-terminus: Ribosome maturation factor RimP (147 aa).

It belongs to the RimP family.

It is found in the cytoplasm. In terms of biological role, required for maturation of 30S ribosomal subunits. This chain is Ribosome maturation factor RimP, found in Sulfurihydrogenibium sp. (strain YO3AOP1).